The chain runs to 273 residues: F-actin-capping protein subunit alpha (273 aa).

Belongs to the F-actin-capping protein alpha subunit family. Component of the F-actin capping complex, composed of a heterodimer of an alpha and a beta subunit.

It localises to the cytoplasm. Its subcellular location is the cytoskeleton. The protein localises to the actin patch. In terms of biological role, F-actin-capping proteins bind in a Ca(2+)-independent manner to the fast growing ends of actin filaments (barbed end) thereby blocking the exchange of subunits at these ends. Unlike other capping proteins (such as gelsolin and severin), these proteins do not sever actin filaments. The chain is F-actin-capping protein subunit alpha (fac-1) from Neurospora crassa (strain ATCC 24698 / 74-OR23-1A / CBS 708.71 / DSM 1257 / FGSC 987).